We begin with the raw amino-acid sequence, 240 residues long: Orotidine 5'-phosphate decarboxylase (240 aa).

Residues aspartate 15, lysine 37, 64–73 (DLKYHDIPNT), threonine 127, arginine 188, glutamine 197, glycine 217, and arginine 218 contribute to the substrate site. Residue lysine 66 is the Proton donor of the active site.

This sequence belongs to the OMP decarboxylase family. Type 1 subfamily. In terms of assembly, homodimer.

It catalyses the reaction orotidine 5'-phosphate + H(+) = UMP + CO2. The protein operates within pyrimidine metabolism; UMP biosynthesis via de novo pathway; UMP from orotate: step 2/2. Catalyzes the decarboxylation of orotidine 5'-monophosphate (OMP) to uridine 5'-monophosphate (UMP). In Geobacter sp. (strain M21), this protein is Orotidine 5'-phosphate decarboxylase.